Consider the following 310-residue polypeptide: MHMNLEAFILGCGGMVPLPHRHLTSVLLRREGELFLFDAGEGTQVSLRRLSLRWKKISAIFISHTHADHITGLPGLLMLSSQVARSEPLYIIGPPRTAEYVETSRRILDMYINYEIIVKEVIEPQVVYRGKDFQVRCFCLDHTKPCMGYTLEEQDRPGSFDPRAAQDLHVPCGALWSQLQSGVAVQSAQGVTVYPEQVMGPARPGRKVSFVTDTKYLQSIAAEVRNSDFFVCEGMFEKGMEKDAAEKKHMTCVQAATIARDARVRLMALIHYSPRYTDHELKRLLKEAQRVFPHTILSRDQLMVPIAYRE.

His-64, His-66, Asp-68, His-69, His-142, Asp-213, and His-271 together coordinate Zn(2+). Asp-68 acts as the Proton acceptor in catalysis.

This sequence belongs to the RNase Z family. In terms of assembly, homodimer. Zn(2+) serves as cofactor.

The enzyme catalyses Endonucleolytic cleavage of RNA, removing extra 3' nucleotides from tRNA precursor, generating 3' termini of tRNAs. A 3'-hydroxy group is left at the tRNA terminus and a 5'-phosphoryl group is left at the trailer molecule.. Its function is as follows. Zinc phosphodiesterase, which displays some tRNA 3'-processing endonuclease activity. Probably involved in tRNA maturation, by removing a 3'-trailer from precursor tRNA. In Treponema pallidum (strain Nichols), this protein is Ribonuclease Z.